The sequence spans 118 residues: Probable small nuclear ribonucleoprotein Sm D2 (118 aa).

A Sm domain is found at 29 to 115 (LSILTNSVKN…VILVVKNPLA (87 aa)).

The protein belongs to the snRNP core protein family.

It localises to the nucleus. Its subcellular location is the cytoplasm. It is found in the cytosol. In terms of biological role, plays a role in pre-mRNA splicing as a core component of the spliceosomal U1, U2, U4 and U5 small nuclear ribonucleoproteins (snRNPs), the building blocks of the spliceosome. The protein is Probable small nuclear ribonucleoprotein Sm D2 (snr-4) of Caenorhabditis elegans.